Consider the following 271-residue polypeptide: 3-methyl-2-oxobutanoate hydroxymethyltransferase (271 aa).

Residues Asp51 and Asp90 each coordinate Mg(2+). 3-methyl-2-oxobutanoate-binding positions include 51–52, Asp90, and Lys118; that span reads DS. Glu120 provides a ligand contact to Mg(2+). The active-site Proton acceptor is the Glu186.

This sequence belongs to the PanB family. In terms of assembly, homodecamer; pentamer of dimers. Mg(2+) serves as cofactor.

It is found in the cytoplasm. It catalyses the reaction 3-methyl-2-oxobutanoate + (6R)-5,10-methylene-5,6,7,8-tetrahydrofolate + H2O = 2-dehydropantoate + (6S)-5,6,7,8-tetrahydrofolate. It functions in the pathway cofactor biosynthesis; (R)-pantothenate biosynthesis; (R)-pantoate from 3-methyl-2-oxobutanoate: step 1/2. In terms of biological role, catalyzes the reversible reaction in which hydroxymethyl group from 5,10-methylenetetrahydrofolate is transferred onto alpha-ketoisovalerate to form ketopantoate. The sequence is that of 3-methyl-2-oxobutanoate hydroxymethyltransferase from Xanthomonas campestris pv. campestris (strain B100).